A 162-amino-acid chain; its full sequence is Interleukin-15 (162 aa).

The first 29 residues, 1–29 (MRISKPYLRSTSIQCYLCLLLNSHFLAEA), serve as a signal peptide directing secretion. Residues 30–48 (GIHVFIFGCISAGLPKTEA) constitute a propeptide that is removed on maturation. 2 cysteine pairs are disulfide-bonded: cysteine 83-cysteine 133 and cysteine 90-cysteine 136. Residues asparagine 108, asparagine 119, asparagine 127, and asparagine 143 are each glycosylated (N-linked (GlcNAc...) asparagine).

The protein belongs to the IL-15/IL-21 family. In terms of tissue distribution, expressed in many tissues including heart, spleen, lung, liver, muscle and kidney (at mRNA level). Expressed in many tissues including heart, spleen, lung, liver, muscle and kidney (at protein level).

It localises to the secreted. Its function is as follows. Cytokine that plays a major role in the development of inflammatory and protective immune responses to microbial invaders and parasites by modulating immune cells of both the innate and adaptive immune systems. Stimulates the proliferation of natural killer cells, T-cells and B-cells and promotes the secretion of several cytokines. In monocytes, induces the production of IL8 and monocyte chemotactic protein 1/CCL2, two chemokines that attract neutrophils and monocytes respectively to sites of infection. Unlike most cytokines, which are secreted in soluble form, IL15 is expressed in association with its high affinity IL15RA on the surface of IL15-producing cells and delivers signals to target cells that express IL2RB and IL2RG receptor subunits. Binding to its receptor triggers the phosphorylation of JAK1 and JAK3 and the recruitment and subsequent phosphorylation of signal transducer and activator of transcription-3/STAT3 and STAT5. In mast cells, induces the rapid tyrosine phosphorylation of STAT6 and thereby controls mast cell survival and release of cytokines such as IL4. The protein is Interleukin-15 (IL15) of Oryctolagus cuniculus (Rabbit).